The chain runs to 128 residues: Large-conductance mechanosensitive channel (128 aa).

The next 2 helical transmembrane spans lie at 10 to 30 (FAMRGNVVDMAVGVIIGGAFG) and 76 to 96 (GLFIQNVFDFIIIAFAIFMMV).

It belongs to the MscL family. Homopentamer.

Its subcellular location is the cell inner membrane. In terms of biological role, channel that opens in response to stretch forces in the membrane lipid bilayer. May participate in the regulation of osmotic pressure changes within the cell. The sequence is that of Large-conductance mechanosensitive channel from Mannheimia succiniciproducens (strain KCTC 0769BP / MBEL55E).